Consider the following 318-residue polypeptide: Taste receptor type 2 member 60 (318 aa).

Over Met1–Val7 the chain is Extracellular. Residues Leu8–Arg28 traverse the membrane as a helical segment. The Cytoplasmic portion of the chain corresponds to Leu29 to Ala40. A helical membrane pass occupies residues Ala41 to Ser61. Over Leu62–Pro88 the chain is Extracellular. A helical transmembrane segment spans residues Tyr89–Trp109. Topologically, residues Phe110–Pro128 are cytoplasmic. Residues Val129–Val149 form a helical membrane-spanning segment. Residues Gly150–Asn183 are Extracellular-facing. Asn179 carries an N-linked (GlcNAc...) asparagine glycan. The helical transmembrane segment at Ser184–Met204 threads the bilayer. The Cytoplasmic segment spans residues Pro205–Phe234. Residues Arg235–Leu255 form a helical membrane-spanning segment. The Extracellular portion of the chain corresponds to Phe256–Val264. Residues Phe265–Ile285 form a helical membrane-spanning segment. At Tyr286 to Pro318 the chain is on the cytoplasmic side.

It belongs to the G-protein coupled receptor T2R family.

It is found in the membrane. In terms of biological role, receptor that may play a role in the perception of bitterness and is gustducin-linked. May play a role in sensing the chemical composition of the gastrointestinal content. The activity of this receptor may stimulate alpha gustducin, mediate PLC-beta-2 activation and lead to the gating of TRPM5. This is Taste receptor type 2 member 60 (TAS2R60) from Pan paniscus (Pygmy chimpanzee).